The sequence spans 138 residues: Large ribosomal subunit protein uL16 (138 aa).

A compositionally biased stretch (basic residues) spans 1–16 (MLIPRRVKHRKQHHPG). Residues 1–25 (MLIPRRVKHRKQHHPGRSGAATGGT) are disordered.

Belongs to the universal ribosomal protein uL16 family. In terms of assembly, part of the 50S ribosomal subunit.

Its function is as follows. Binds 23S rRNA and is also seen to make contacts with the A and possibly P site tRNAs. The protein is Large ribosomal subunit protein uL16 of Pseudarthrobacter chlorophenolicus (strain ATCC 700700 / DSM 12829 / CIP 107037 / JCM 12360 / KCTC 9906 / NCIMB 13794 / A6) (Arthrobacter chlorophenolicus).